The primary structure comprises 365 residues: DNA replication and repair protein RecF (365 aa).

Residue Gly30 to Thr37 coordinates ATP.

This sequence belongs to the RecF family.

The protein localises to the cytoplasm. Functionally, the RecF protein is involved in DNA metabolism; it is required for DNA replication and normal SOS inducibility. RecF binds preferentially to single-stranded, linear DNA. It also seems to bind ATP. The chain is DNA replication and repair protein RecF from Leptospira interrogans serogroup Icterohaemorrhagiae serovar Lai (strain 56601).